Consider the following 476-residue polypeptide: 4-(hydroxymethyl)benzenesulfonate dehydrogenase TsaD1 (476 aa).

NAD(+) contacts are provided by residues 154–155 (WN), 178–181 (KAAE), and 230–231 (GS). E252 serves as the catalytic Proton acceptor. An NAD(+)-binding site is contributed by L253. C286 functions as the Nucleophile in the catalytic mechanism. Residue E380 coordinates NAD(+).

Belongs to the aldehyde dehydrogenase family. In terms of assembly, homodimer.

It carries out the reaction 4-(hydroxymethyl)benzenesulfonate + NAD(+) = 4-formylbenzenesulfonate + NADH + H(+). Its function is as follows. Involved in the toluene-4-sulfonate degradation pathway. Does not discriminate between the sulfonate and the carboxyl substituents and can also be involved in the p-toluenecarboxylate degradation pathway. The polypeptide is 4-(hydroxymethyl)benzenesulfonate dehydrogenase TsaD1 (tsaD1) (Comamonas testosteroni (Pseudomonas testosteroni)).